The chain runs to 510 residues: Probable serine/threonine-protein kinase 2 (510 aa).

Residues 111–364 enclose the Protein kinase domain; it reads YVLNKKIGKG…ALQALGHQWF (254 aa). Residues 117–125 and K140 each bind ATP; that span reads IGKGSFSTA. Residue D230 is the Proton acceptor of the active site. The interval 408–428 is disordered; it reads NDDIYNNNNNNNQLDPNKNHK.

This sequence belongs to the protein kinase superfamily. Ser/Thr protein kinase family.

The protein resides in the membrane. It carries out the reaction L-seryl-[protein] + ATP = O-phospho-L-seryl-[protein] + ADP + H(+). The enzyme catalyses L-threonyl-[protein] + ATP = O-phospho-L-threonyl-[protein] + ADP + H(+). The polypeptide is Probable serine/threonine-protein kinase 2 (PK2) (Plasmodium falciparum (isolate K1 / Thailand)).